Here is a 522-residue protein sequence, read N- to C-terminus: Protein nucleotidyltransferase YdiU (522 aa).

ATP is bound by residues Gly101, Gly103, Arg104, Lys123, Asp135, Gly136, Arg193, and Arg200. Asp270 functions as the Proton acceptor in the catalytic mechanism. Residues Asn271 and Asp280 each contribute to the Mg(2+) site. An ATP-binding site is contributed by Asp280.

This sequence belongs to the SELO family. The cofactor is Mg(2+). It depends on Mn(2+) as a cofactor.

The enzyme catalyses L-seryl-[protein] + ATP = 3-O-(5'-adenylyl)-L-seryl-[protein] + diphosphate. It catalyses the reaction L-threonyl-[protein] + ATP = 3-O-(5'-adenylyl)-L-threonyl-[protein] + diphosphate. It carries out the reaction L-tyrosyl-[protein] + ATP = O-(5'-adenylyl)-L-tyrosyl-[protein] + diphosphate. The catalysed reaction is L-histidyl-[protein] + UTP = N(tele)-(5'-uridylyl)-L-histidyl-[protein] + diphosphate. The enzyme catalyses L-seryl-[protein] + UTP = O-(5'-uridylyl)-L-seryl-[protein] + diphosphate. It catalyses the reaction L-tyrosyl-[protein] + UTP = O-(5'-uridylyl)-L-tyrosyl-[protein] + diphosphate. In terms of biological role, nucleotidyltransferase involved in the post-translational modification of proteins. It can catalyze the addition of adenosine monophosphate (AMP) or uridine monophosphate (UMP) to a protein, resulting in modifications known as AMPylation and UMPylation. The polypeptide is Protein nucleotidyltransferase YdiU (Flavobacterium johnsoniae (strain ATCC 17061 / DSM 2064 / JCM 8514 / BCRC 14874 / CCUG 350202 / NBRC 14942 / NCIMB 11054 / UW101) (Cytophaga johnsonae)).